A 451-amino-acid polypeptide reads, in one-letter code: Chromosomal replication initiator protein DnaA (451 aa).

Residues 1-101 are domain I, interacts with DnaA modulators; the sequence is MTENETIFWN…TSNHIFSRQT (101 aa). Residues 101 to 110 form a domain II region; sequence TINSLPAITS. A domain III, AAA+ region region spans residues 111-329; that stretch reads DLNPKYSFDN…GALKDISLVA (219 aa). ATP-binding residues include G155, G157, K158, and T159. Residues 330–451 are domain IV, binds dsDNA; sequence NFKEIDKITV…EIETIKNKIK (122 aa).

The protein belongs to the DnaA family. In terms of assembly, oligomerizes as a right-handed, spiral filament on DNA at oriC.

It localises to the cytoplasm. Its function is as follows. Plays an essential role in the initiation and regulation of chromosomal replication. ATP-DnaA binds to the origin of replication (oriC) to initiate formation of the DNA replication initiation complex once per cell cycle. Binds the DnaA box (a 9 base pair repeat at the origin) and separates the double-stranded (ds)DNA. Forms a right-handed helical filament on oriC DNA; dsDNA binds to the exterior of the filament while single-stranded (ss)DNA is stabiized in the filament's interior. The ATP-DnaA-oriC complex binds and stabilizes one strand of the AT-rich DNA unwinding element (DUE), permitting loading of DNA polymerase. After initiation quickly degrades to an ADP-DnaA complex that is not apt for DNA replication. Binds acidic phospholipids. The sequence is that of Chromosomal replication initiator protein DnaA from Streptococcus uberis (strain ATCC BAA-854 / 0140J).